The chain runs to 148 residues: MKMELKVKPIENGTVIDHISGSKALKVYKILNIEEKLPITLALNVPSKKGVMKDILKIEGLELTKDDVNKIALISPDATINIIKEGKVIKKFKVDLPKRIDGIIKCTNPNCITNKENIEGKFSIEQKNTLKIRCEYCEKFINSIIISK.

Zn(2+) contacts are provided by C106, C111, C134, and C137.

It belongs to the PyrI family. Contains catalytic and regulatory chains. The cofactor is Zn(2+).

Its function is as follows. Involved in allosteric regulation of aspartate carbamoyltransferase. The chain is Aspartate carbamoyltransferase regulatory chain from Methanococcus maripaludis (strain C5 / ATCC BAA-1333).